A 99-amino-acid chain; its full sequence is Putative pterin-4-alpha-carbinolamine dehydratase (99 aa).

Belongs to the pterin-4-alpha-carbinolamine dehydratase family.

It carries out the reaction (4aS,6R)-4a-hydroxy-L-erythro-5,6,7,8-tetrahydrobiopterin = (6R)-L-erythro-6,7-dihydrobiopterin + H2O. The sequence is that of Putative pterin-4-alpha-carbinolamine dehydratase from Saccharolobus islandicus (strain M.16.27) (Sulfolobus islandicus).